Consider the following 443-residue polypeptide: Acid phosphatase type 7 (443 aa).

Positions 1 to 23 (MAAAPPPPPPLLLLLLCVCAVFA) are cleaved as a signal peptide. Residues N53, N76, and N126 are each glycosylated (N-linked (GlcNAc...) asparagine). The Fe cation site is built by D140, D169, and Y172. A Zn(2+)-binding site is contributed by D169. Position 204 (N204) interacts with Zn(2+). An N-linked (GlcNAc...) asparagine glycan is attached at N210. H288 is a Zn(2+) binding site. N313 is a glycosylation site (N-linked (GlcNAc...) asparagine). H338 lines the Zn(2+) pocket. H340 provides a ligand contact to Fe cation. Residues N355 and N409 are each glycosylated (N-linked (GlcNAc...) asparagine).

Belongs to the metallophosphoesterase superfamily. Purple acid phosphatase family. The cofactor is Fe cation. Zn(2+) serves as cofactor.

The protein resides in the secreted. The catalysed reaction is a phosphate monoester + H2O = an alcohol + phosphate. The sequence is that of Acid phosphatase type 7 from Danio rerio (Zebrafish).